We begin with the raw amino-acid sequence, 204 residues long: uncharacterized protein (204 aa).

It localises to the cytoplasm. It is found in the nucleus. This is an uncharacterized protein from Schizosaccharomyces pombe (strain 972 / ATCC 24843) (Fission yeast).